Reading from the N-terminus, the 470-residue chain is Rhamnulokinase (470 aa).

12 to 16 contacts ATP; that stretch reads ASSGR. Substrate is bound by residues A80 and 237–239; that span reads HDT. Residue D238 is the Proton acceptor of the active site. T259 is a binding site for ATP. Position 296 (N296) interacts with substrate. Q304 serves as a coordination point for ATP. A disulfide bridge links C353 with C370. An ATP-binding site is contributed by G402.

It belongs to the rhamnulokinase family. Requires Mg(2+) as cofactor.

It catalyses the reaction L-rhamnulose + ATP = L-rhamnulose 1-phosphate + ADP + H(+). The protein operates within carbohydrate degradation; L-rhamnose degradation; glycerone phosphate from L-rhamnose: step 2/3. Its function is as follows. Involved in the catabolism of L-rhamnose (6-deoxy-L-mannose). Catalyzes the transfer of the gamma-phosphate group from ATP to the 1-hydroxyl group of L-rhamnulose to yield L-rhamnulose 1-phosphate. The sequence is that of Rhamnulokinase from Oceanobacillus iheyensis (strain DSM 14371 / CIP 107618 / JCM 11309 / KCTC 3954 / HTE831).